The following is a 591-amino-acid chain: Monoterpene synthase 8, chloroplastic (591 aa).

A chloroplast-targeting transit peptide spans 1–46 (MSLLLAPPSYFPFRGLRRSTAAKQPPCLRLVKCTADRQSPEAARRS). Aspartate 346, aspartate 350, and glutamate 497 together coordinate Mg(2+). Positions 346-350 (DDVYD) match the DDXXD motif motif.

The protein belongs to the terpene synthase family. Tpsa subfamily. Requires Mg(2+) as cofactor. Mn(2+) is required as a cofactor. As to expression, highly expressed in flowers, petals and sepals, but almost undetectable in vegetative organs.

The protein localises to the plastid. It is found in the chloroplast. The enzyme catalyses (2E)-geranyl diphosphate + H2O = (R)-linalool + diphosphate. The catalysed reaction is (2E)-geranyl diphosphate + H2O = (S)-linalool + diphosphate. It catalyses the reaction (2E,6E)-farnesyl diphosphate = (S)-beta-bisabolene + diphosphate. It carries out the reaction (2E,6E)-farnesyl diphosphate = (E,R)-alpha-bisabolene + diphosphate. The enzyme catalyses (2E,6E)-farnesyl diphosphate = (E)-beta-farnesene + diphosphate. The catalysed reaction is (2E,6E)-farnesyl diphosphate = beta-sesquiphellandrene + diphosphate. It catalyses the reaction (2E,6E)-farnesyl diphosphate = (1S,5S,6R)-alpha-bergamotene + diphosphate. The protein operates within secondary metabolite biosynthesis; terpenoid biosynthesis. Sesquiterpene and monoterpene synthase involved in the biosynthesis of volatile compounds present in floral scent. Mediates the conversion of (2E)-geranyl diphosphate (GPP) into linalool, with trace levels of myrcene, limonene and (Z)-beta-ocimene. Also acts as a sesquiterpene synthase by catalyzing the conversion of farnesyl diphosphate (FPP) to alpha-bergamotene and beta-bisabolene and to minor products including alpha-curcumene, cis-alpha-bisabolene, beta-farnesene and beta-sesquiphellandrene, as well as seven other unidentified sesquiterpenes. This chain is Monoterpene synthase 8, chloroplastic, found in Hedychium coronarium (White butterfly ginger-lily).